The primary structure comprises 213 residues: Orotate phosphoribosyltransferase (213 aa).

Lys-26 contributes to the 5-phospho-alpha-D-ribose 1-diphosphate binding site. 34 to 35 (FF) provides a ligand contact to orotate. Residues 72-73 (YK), Arg-99, Lys-100, Lys-103, His-105, and 124-132 (DDVITAGTA) contribute to the 5-phospho-alpha-D-ribose 1-diphosphate site. Residues Thr-128 and Arg-156 each coordinate orotate.

The protein belongs to the purine/pyrimidine phosphoribosyltransferase family. PyrE subfamily. As to quaternary structure, homodimer. Mg(2+) serves as cofactor.

It carries out the reaction orotidine 5'-phosphate + diphosphate = orotate + 5-phospho-alpha-D-ribose 1-diphosphate. Its pathway is pyrimidine metabolism; UMP biosynthesis via de novo pathway; UMP from orotate: step 1/2. In terms of biological role, catalyzes the transfer of a ribosyl phosphate group from 5-phosphoribose 1-diphosphate to orotate, leading to the formation of orotidine monophosphate (OMP). The chain is Orotate phosphoribosyltransferase from Pectobacterium carotovorum subsp. carotovorum (strain PC1).